A 966-amino-acid chain; its full sequence is Regulator of G-protein signaling 3 (966 aa).

The region spanning 18–95 is the PDZ domain; sequence QITIRRGKDG…EIILLVWRVV (78 aa). A disordered region spans residues 115 to 135; that stretch reads THDLLSPPNKREKNCTHGAPV. R167 carries the omega-N-methylarginine modification. Disordered regions lie at residues 403–618 and 637–704; these read EADE…TGAV and YSQL…RVQN. 2 stretches are compositionally biased toward polar residues: residues 527–548 and 576–594; these read PETS…TELP and SSAS…SSLG. Over residues 649–675 the composition is skewed to acidic residues; the sequence is GEDEDAEEGEEGGEGEEDEEDDTSDDN. A compositionally biased stretch (basic and acidic residues) spans 676 to 686; it reads YGDRSEAKRSS. 4 positions are modified to phosphoserine: S712, S715, S747, and S776. The interval 806 to 830 is disordered; sequence FRRRNESPGAQPASKTDKTTKSFKP. Basic and acidic residues predominate over residues 820-830; the sequence is KTDKTTKSFKP. One can recognise an RGS domain in the interval 841–966; that stretch reads SLEKLLLHKY…INQKKMSPPL (126 aa).

As to quaternary structure, binds the GNB1-GNG2 heterodimer. Binds EFNB1 and EFNB2. Phosphorylated by cyclic GMP-dependent protein kinase. In terms of processing, ISGylated. As to expression, detected in embryos from E8.5-16.5 in cortical ventricular zone, dorsal root ganglia and cerebellar primordia. Isoform 3 is detected in testis and in spermatocytes from newborn mice. Levels increase and reach a maximum after 21 days; after this they decrease again. Long isoforms are widely expressed.

It localises to the cytoplasm. It is found in the cell membrane. The protein resides in the nucleus. Functionally, down-regulates signaling from heterotrimeric G-proteins by increasing the GTPase activity of the alpha subunits, thereby driving them into their inactive GDP-bound form. Down-regulates G-protein-mediated release of inositol phosphates and activation of MAP kinases. The protein is Regulator of G-protein signaling 3 (Rgs3) of Mus musculus (Mouse).